Reading from the N-terminus, the 256-residue chain is N-glycosylase/DNA lyase (256 aa).

Gln-31, Ser-58, and Trp-69 together coordinate 8-oxoguanine. A helix-hairpin-helix region spans residues 125–184 (TLRQLSHIVGARREQKTLVFTIKILNYAYMCSRGVNRVLPFDIPIPVDYRVARLTWCAGL). Lys-140 functions as the Schiff-base intermediate with DNA in the catalytic mechanism. The 8-oxoguanine site is built by Phe-144 and Pro-170. Residue Asp-172 is part of the active site. The 8-oxoguanine site is built by Asp-218 and Trp-222.

It belongs to the archaeal N-glycosylase/DNA lyase (AGOG) family.

It catalyses the reaction 2'-deoxyribonucleotide-(2'-deoxyribose 5'-phosphate)-2'-deoxyribonucleotide-DNA = a 3'-end 2'-deoxyribonucleotide-(2,3-dehydro-2,3-deoxyribose 5'-phosphate)-DNA + a 5'-end 5'-phospho-2'-deoxyribonucleoside-DNA + H(+). Functionally, DNA repair enzyme that is part of the base excision repair (BER) pathway; protects from oxidative damage by removing the major product of DNA oxidation, 8-oxoguanine (GO), from single- and double-stranded DNA substrates. This Pyrobaculum aerophilum (strain ATCC 51768 / DSM 7523 / JCM 9630 / CIP 104966 / NBRC 100827 / IM2) protein is N-glycosylase/DNA lyase.